A 405-amino-acid chain; its full sequence is Cysteine desulfurase IscS (405 aa).

Pyridoxal 5'-phosphate-binding positions include 75–76 (AT), N155, Q183, and 203–205 (SGH). K206 carries the N6-(pyridoxal phosphate)lysine modification. T243 provides a ligand contact to pyridoxal 5'-phosphate. The Cysteine persulfide intermediate role is filled by C329. Position 329 (C329) interacts with [2Fe-2S] cluster.

The protein belongs to the class-V pyridoxal-phosphate-dependent aminotransferase family. NifS/IscS subfamily. As to quaternary structure, homodimer. Forms a heterotetramer with IscU, interacts with other sulfur acceptors. Pyridoxal 5'-phosphate is required as a cofactor.

Its subcellular location is the cytoplasm. It carries out the reaction (sulfur carrier)-H + L-cysteine = (sulfur carrier)-SH + L-alanine. The protein operates within cofactor biosynthesis; iron-sulfur cluster biosynthesis. Its function is as follows. Master enzyme that delivers sulfur to a number of partners involved in Fe-S cluster assembly, tRNA modification or cofactor biosynthesis. Catalyzes the removal of elemental sulfur atoms from cysteine to produce alanine. Functions as a sulfur delivery protein for Fe-S cluster synthesis onto IscU, an Fe-S scaffold assembly protein, as well as other S acceptor proteins. The sequence is that of Cysteine desulfurase IscS from Pseudoalteromonas translucida (strain TAC 125).